We begin with the raw amino-acid sequence, 46 residues long: Mu-segestritoxin-Sf1c (46 aa).

4 disulfides stabilise this stretch: Cys3–Cys19, Cys10–Cys22, Cys18–Cys42, and Cys24–Cys40. The segment at 31–33 is keys region for toxin activity; it reads RPW.

The protein belongs to the neurotoxin 16 (SFI) family. As to expression, expressed by the venom gland.

It localises to the secreted. Functionally, insecticidal toxin. It inhibits insect voltage-gated sodium channels (Nav) by partially blocking the channel pore in DUM neurons from the American cockroach, not by acting as a gating modifier. The inhibition is only partially reversible after prolonged washout. In vivo, the toxin causes flaccid paralysis followed by death when injected into Heliothis virescens larvae. It also causes uncoordinated movements followed by full paralysis to sheep blowflies (Lucilia cuprina). When the toxin is fused to snowdrop lectin, it is orally active against larvae of the tomato moth (Laconobia oleracea), the rice brown planthopper (Nilaparvata lugens), and the peach-potato aphid (Myzus persicae). This is Mu-segestritoxin-Sf1c from Segestria florentina (Tube-web spider).